The chain runs to 63 residues: Protein DsrB (63 aa).

It belongs to the DsrB family.

This Yersinia pseudotuberculosis serotype O:3 (strain YPIII) protein is Protein DsrB.